We begin with the raw amino-acid sequence, 432 residues long: Adenosine 3'-phospho 5'-phosphosulfate transporter 1 (432 aa).

A run of 9 helical transmembrane segments spans residues 5-25 (WWAVVVLAAFPSLGAGGETPE), 40-60 (VVNAAGYASFMVPGYLLVQYF), 109-129 (ALKLLFCATGLQVSYLTWGVL), 154-174 (FLVLMNRVLALIVAGLSCVLC), 238-258 (WEYLTATLISIGVSMFLLSSG), 265-285 (PATTLSGLILLAGYIAFDSFT), 299-319 (SVQMMFGVNFFSCLFTVGSLL), 353-373 (LFIFYTIGQFGAAVFTIIMTL), and 387-407 (GHTVTVVGGLGVAVVFAALLL). A Phosphoserine modification is found at Ser-427.

The protein belongs to the nucleotide-sugar transporter family. SLC35B subfamily. Highly expressed in the placenta, pancreas, mammary gland and skeletal muscle. Weakly or not expressed in colon, heart and prostate. Expressed in the brain, predominantly in frontal lobe gray matter, subcortical frontal white matter and cerebellum.

Its subcellular location is the golgi apparatus membrane. It catalyses the reaction 3'-phosphoadenylyl sulfate(in) + adenosine 3',5'-bisphosphate(out) = 3'-phosphoadenylyl sulfate(out) + adenosine 3',5'-bisphosphate(in). In terms of biological role, probably functions as a 3'-phosphoadenylyl sulfate:adenosine 3',5'-bisphosphate antiporter at the Golgi membranes. Mediates the transport from the cytosol into the lumen of the Golgi of 3'-phosphoadenylyl sulfate/adenosine 3'-phospho 5'-phosphosulfate (PAPS), a universal sulfuryl donor for sulfation events that take place in that compartment. In Homo sapiens (Human), this protein is Adenosine 3'-phospho 5'-phosphosulfate transporter 1.